Reading from the N-terminus, the 141-residue chain is AsCystatin (141 aa).

The signal sequence occupies residues 1–26; sequence MVHSQLPVAAPLRLLCALLLLPLATM. A Cystatin domain is found at 29–129; that stretch reads GGLSPRSVTD…CRFQVWSCPW (101 aa). Residues 73–77 carry the Secondary area of contact motif; it reads QVVTG. 2 disulfide bridges follow: Cys-91/Cys-107 and Cys-120/Cys-140.

It belongs to the cystatin family. As to expression, expressed at a low level by the venom gland (at protein level).

It localises to the secreted. Recombinant AsCystatin inhibits various C1 cysteine proteases including cathepsin L (Ki is 0.89 pM), papain (Ki is 1.74 pM) and cathepsin B (Ki is 0.69 nM). This activity has also been observed in the crude venom. This protein has no toxic activity and its function in the venom is unknown. It may play a role as a housekeeping or regulatory protein. The protein is AsCystatin of Austrelaps superbus (Lowland copperhead snake).